The following is a 177-amino-acid chain: Large ribosomal subunit protein uL6 (177 aa).

The protein belongs to the universal ribosomal protein uL6 family. Part of the 50S ribosomal subunit.

Functionally, this protein binds to the 23S rRNA, and is important in its secondary structure. It is located near the subunit interface in the base of the L7/L12 stalk, and near the tRNA binding site of the peptidyltransferase center. This is Large ribosomal subunit protein uL6 from Rubrobacter xylanophilus (strain DSM 9941 / JCM 11954 / NBRC 16129 / PRD-1).